Here is a 340-residue protein sequence, read N- to C-terminus: UDP-N-acetylglucosamine--N-acetylmuramyl-(pentapeptide) pyrophosphoryl-undecaprenol N-acetylglucosamine transferase (340 aa).

UDP-N-acetyl-alpha-D-glucosamine is bound by residues 10–12, N110, S171, and Q272; that span reads TGG.

The protein belongs to the glycosyltransferase 28 family. MurG subfamily.

The protein resides in the cell membrane. The catalysed reaction is di-trans,octa-cis-undecaprenyl diphospho-N-acetyl-alpha-D-muramoyl-L-alanyl-D-glutamyl-meso-2,6-diaminopimeloyl-D-alanyl-D-alanine + UDP-N-acetyl-alpha-D-glucosamine = di-trans,octa-cis-undecaprenyl diphospho-[N-acetyl-alpha-D-glucosaminyl-(1-&gt;4)]-N-acetyl-alpha-D-muramoyl-L-alanyl-D-glutamyl-meso-2,6-diaminopimeloyl-D-alanyl-D-alanine + UDP + H(+). Its pathway is cell wall biogenesis; peptidoglycan biosynthesis. Cell wall formation. Catalyzes the transfer of a GlcNAc subunit on undecaprenyl-pyrophosphoryl-MurNAc-pentapeptide (lipid intermediate I) to form undecaprenyl-pyrophosphoryl-MurNAc-(pentapeptide)GlcNAc (lipid intermediate II). In Wolbachia pipientis subsp. Culex pipiens (strain wPip), this protein is UDP-N-acetylglucosamine--N-acetylmuramyl-(pentapeptide) pyrophosphoryl-undecaprenol N-acetylglucosamine transferase.